The following is a 462-amino-acid chain: Phospho-2-dehydro-3-deoxyheptonate aldolase AroG (462 aa).

A Mn(2+)-binding site is contributed by Cys-87. Phosphoenolpyruvate-binding positions include Arg-126, 283 to 284, Lys-306, and Arg-337; that span reads ER. The Mn(2+) site is built by His-369, Glu-411, and Asp-441.

As to quaternary structure, homodimer. Interacts with Rv0948c. It depends on Mn(2+) as a cofactor. Co(2+) serves as cofactor. Requires Cd(2+) as cofactor.

It carries out the reaction D-erythrose 4-phosphate + phosphoenolpyruvate + H2O = 7-phospho-2-dehydro-3-deoxy-D-arabino-heptonate + phosphate. Its pathway is metabolic intermediate biosynthesis; chorismate biosynthesis; chorismate from D-erythrose 4-phosphate and phosphoenolpyruvate: step 1/7. Its activity is regulated as follows. Feedback inhibited by tryptophan, tyrosine, phenylalanine and chorismate. In terms of biological role, catalyzes an aldol-like condensation reaction between phosphoenolpyruvate (PEP) and D-erythrose 4-phosphate (E4P) to generate 3-deoxy-D-arabino-heptulosonate 7-phosphate (DAH7P) and inorganic phosphate. The chain is Phospho-2-dehydro-3-deoxyheptonate aldolase AroG (aroG) from Mycobacterium tuberculosis (strain ATCC 25618 / H37Rv).